The chain runs to 84 residues: MRTTVTLDDDVEQLVRRRMAERQVSFKKALNDAIRDGASGRPAPSHFSTRTADLGVPAVNLDRALQLAADLEDEELVRRQRRGS.

Probable antitoxin component of a type II toxin-antitoxin (TA) system. Its putative cognate toxin is VapC37. In Mycobacterium tuberculosis (strain CDC 1551 / Oshkosh), this protein is Putative antitoxin VapB37 (vapB37).